The sequence spans 1372 residues: Serine protease pic autotransporter (1372 aa).

Residues 1–55 (MNKVYSLKYCPVTGGLIAVSELARRVIKKTCRRLTHILLAGIPAICLCYSQISQA) form the signal peptide. The 246-residue stretch at 56-301 (GIVRSDIAYQ…NVIPTDYLNQ (246 aa)) folds into the Peptidase S6 domain. Residues His-127, Asp-155, and Ser-258 each act as charge relay system in the active site. The Autotransporter domain occupies 1106-1372 (DTNGDAGAWA…AVNANFRYMF (267 aa)).

Cleaved to release the mature protein from the outer membrane.

Its subcellular location is the periplasm. It localises to the secreted. The protein localises to the cell surface. The protein resides in the cell outer membrane. Its function is as follows. Involved in intestinal colonization, displays in vitro mucinolytic activity, serum resistance, and hemagglutination. Important to penetrate the intestinal mucus layer. This is Serine protease pic autotransporter (pic) from Escherichia coli O44:H18 (strain 042 / EAEC).